The primary structure comprises 339 residues: Ketol-acid reductoisomerase (NADP(+)) (339 aa).

The 182-residue stretch at 1–182 folds into the KARI N-terminal Rossmann domain; the sequence is MRVYYDRDAD…GGGRAGIIET (182 aa). Residues 24-27, R48, S51, T53, and 83-86 each bind NADP(+); these read YGSQ and DELQ. The active site involves H108. G134 contributes to the NADP(+) binding site. A KARI C-terminal knotted domain is found at 183-328; it reads TFKEECETDL…AKLRGMMPWI (146 aa). 4 residues coordinate Mg(2+): D191, E195, E227, and E231. S252 is a substrate binding site.

The protein belongs to the ketol-acid reductoisomerase family. Requires Mg(2+) as cofactor.

It catalyses the reaction (2R)-2,3-dihydroxy-3-methylbutanoate + NADP(+) = (2S)-2-acetolactate + NADPH + H(+). It carries out the reaction (2R,3R)-2,3-dihydroxy-3-methylpentanoate + NADP(+) = (S)-2-ethyl-2-hydroxy-3-oxobutanoate + NADPH + H(+). The protein operates within amino-acid biosynthesis; L-isoleucine biosynthesis; L-isoleucine from 2-oxobutanoate: step 2/4. It participates in amino-acid biosynthesis; L-valine biosynthesis; L-valine from pyruvate: step 2/4. Functionally, involved in the biosynthesis of branched-chain amino acids (BCAA). Catalyzes an alkyl-migration followed by a ketol-acid reduction of (S)-2-acetolactate (S2AL) to yield (R)-2,3-dihydroxy-isovalerate. In the isomerase reaction, S2AL is rearranged via a Mg-dependent methyl migration to produce 3-hydroxy-3-methyl-2-ketobutyrate (HMKB). In the reductase reaction, this 2-ketoacid undergoes a metal-dependent reduction by NADPH to yield (R)-2,3-dihydroxy-isovalerate. The chain is Ketol-acid reductoisomerase (NADP(+)) from Methylobacterium radiotolerans (strain ATCC 27329 / DSM 1819 / JCM 2831 / NBRC 15690 / NCIMB 10815 / 0-1).